A 366-amino-acid polypeptide reads, in one-letter code: 3-isopropylmalate dehydrogenase (366 aa).

Glycine 78 to glutamate 91 lines the NAD(+) pocket. Positions 99, 109, 138, and 227 each coordinate substrate. Aspartate 227, aspartate 251, and aspartate 255 together coordinate Mg(2+). Glycine 285–asparagine 297 contributes to the NAD(+) binding site.

This sequence belongs to the isocitrate and isopropylmalate dehydrogenases family. LeuB type 1 subfamily. In terms of assembly, homodimer. Requires Mg(2+) as cofactor. It depends on Mn(2+) as a cofactor.

It is found in the cytoplasm. The enzyme catalyses (2R,3S)-3-isopropylmalate + NAD(+) = 4-methyl-2-oxopentanoate + CO2 + NADH. It functions in the pathway amino-acid biosynthesis; L-leucine biosynthesis; L-leucine from 3-methyl-2-oxobutanoate: step 3/4. Functionally, catalyzes the oxidation of 3-carboxy-2-hydroxy-4-methylpentanoate (3-isopropylmalate) to 3-carboxy-4-methyl-2-oxopentanoate. The product decarboxylates to 4-methyl-2 oxopentanoate. The protein is 3-isopropylmalate dehydrogenase of Buchnera aphidicola subsp. Baizongia pistaciae (strain Bp).